A 333-amino-acid polypeptide reads, in one-letter code: Ketol-acid reductoisomerase (NADP(+)) (333 aa).

A KARI N-terminal Rossmann domain is found at 1 to 179 (MFYDDDADLT…GGTRAGVIKT (179 aa)). Residues 22 to 25 (YGSQ), lysine 45, serine 48, serine 50, and 80 to 83 (DTAQ) contribute to the NADP(+) site. Residue histidine 105 is part of the active site. An NADP(+)-binding site is contributed by glycine 131. One can recognise a KARI C-terminal knotted domain in the interval 180-325 (TFKDETETDL…KRLRDLMSWV (146 aa)). Mg(2+) is bound by residues aspartate 188, glutamate 192, glutamate 224, and glutamate 228. Serine 249 is a substrate binding site.

Belongs to the ketol-acid reductoisomerase family. Requires Mg(2+) as cofactor.

The catalysed reaction is (2R)-2,3-dihydroxy-3-methylbutanoate + NADP(+) = (2S)-2-acetolactate + NADPH + H(+). It catalyses the reaction (2R,3R)-2,3-dihydroxy-3-methylpentanoate + NADP(+) = (S)-2-ethyl-2-hydroxy-3-oxobutanoate + NADPH + H(+). It participates in amino-acid biosynthesis; L-isoleucine biosynthesis; L-isoleucine from 2-oxobutanoate: step 2/4. It functions in the pathway amino-acid biosynthesis; L-valine biosynthesis; L-valine from pyruvate: step 2/4. Involved in the biosynthesis of branched-chain amino acids (BCAA). Catalyzes an alkyl-migration followed by a ketol-acid reduction of (S)-2-acetolactate (S2AL) to yield (R)-2,3-dihydroxy-isovalerate. In the isomerase reaction, S2AL is rearranged via a Mg-dependent methyl migration to produce 3-hydroxy-3-methyl-2-ketobutyrate (HMKB). In the reductase reaction, this 2-ketoacid undergoes a metal-dependent reduction by NADPH to yield (R)-2,3-dihydroxy-isovalerate. The chain is Ketol-acid reductoisomerase (NADP(+)) from Mycobacterium avium (strain 104).